The sequence spans 142 residues: Transcriptional regulator MraZ (142 aa).

2 SpoVT-AbrB domains span residues 5–51 (ASAL…PRPE) and 77–120 (AMDV…DSQT).

Belongs to the MraZ family. Forms oligomers.

It is found in the cytoplasm. It localises to the nucleoid. This is Transcriptional regulator MraZ from Burkholderia multivorans (strain ATCC 17616 / 249).